Reading from the N-terminus, the 37-residue chain is VLLSVGGDADTESPEKKNLGGVSIVDLSMDDFRGLLT.

The interval Val1–Gly20 is disordered. The 37-residue stretch at Val1–Thr37 folds into the GH18 domain.

Belongs to the glycosyl hydrolase 18 family. IDGF subfamily. In terms of processing, glycosylated.

The protein localises to the secreted. Functionally, cooperates with insulin-like peptides to stimulate the proliferation, polarization and motility of imaginal disk cells. May act by stabilizing the binding of insulin-like peptides to its receptor through a simultaneous interaction with both molecules to form a multiprotein signaling complex. The protein is Chitinase-like protein of Heliothis virescens (Tobacco budworm moth).